Here is a 464-residue protein sequence, read N- to C-terminus: tRNA modification GTPase MnmE (464 aa).

(6S)-5-formyl-5,6,7,8-tetrahydrofolate contacts are provided by Arg23, Glu84, and Arg123. The region spanning 216–386 (GARATLVGRP…LGATVARLLL (171 aa)) is the TrmE-type G domain. K(+) is bound at residue Asn226. GTP-binding positions include 226–231 (NAGKSS), 245–251 (TPIPGTT), and 270–273 (DTAG). Mg(2+) is bound at residue Ser230. K(+) is bound by residues Thr245, Ile247, and Thr250. Mg(2+) is bound at residue Thr251. Residue Lys464 participates in (6S)-5-formyl-5,6,7,8-tetrahydrofolate binding.

This sequence belongs to the TRAFAC class TrmE-Era-EngA-EngB-Septin-like GTPase superfamily. TrmE GTPase family. As to quaternary structure, homodimer. Heterotetramer of two MnmE and two MnmG subunits. K(+) is required as a cofactor.

It is found in the cytoplasm. Functionally, exhibits a very high intrinsic GTPase hydrolysis rate. Involved in the addition of a carboxymethylaminomethyl (cmnm) group at the wobble position (U34) of certain tRNAs, forming tRNA-cmnm(5)s(2)U34. This is tRNA modification GTPase MnmE from Roseiflexus castenholzii (strain DSM 13941 / HLO8).